Reading from the N-terminus, the 329-residue chain is 4-hydroxythreonine-4-phosphate dehydrogenase (329 aa).

Substrate is bound by residues His136 and Thr137. The a divalent metal cation site is built by His166, His211, and His266. Residues Lys274, Asn283, and Arg292 each contribute to the substrate site.

This sequence belongs to the PdxA family. In terms of assembly, homodimer. Zn(2+) is required as a cofactor. The cofactor is Mg(2+). It depends on Co(2+) as a cofactor.

The protein localises to the cytoplasm. It carries out the reaction 4-(phosphooxy)-L-threonine + NAD(+) = 3-amino-2-oxopropyl phosphate + CO2 + NADH. It functions in the pathway cofactor biosynthesis; pyridoxine 5'-phosphate biosynthesis; pyridoxine 5'-phosphate from D-erythrose 4-phosphate: step 4/5. Functionally, catalyzes the NAD(P)-dependent oxidation of 4-(phosphooxy)-L-threonine (HTP) into 2-amino-3-oxo-4-(phosphooxy)butyric acid which spontaneously decarboxylates to form 3-amino-2-oxopropyl phosphate (AHAP). This Escherichia coli (strain 55989 / EAEC) protein is 4-hydroxythreonine-4-phosphate dehydrogenase.